The primary structure comprises 173 residues: uncharacterized protein (173 aa).

Residues 49 to 72 are disordered; sequence PTRSGRTSNSGNRGPVMTSTSSIN.

This is an uncharacterized protein from Human adenovirus B serotype 7 (HAdV-7).